We begin with the raw amino-acid sequence, 346 residues long: 4-hydroxy-2-oxovalerate aldolase (346 aa).

Residues 8–260 (VILHDMSLRD…ETGIDLYKIM (253 aa)) enclose the Pyruvate carboxyltransferase domain. 16 to 17 (RD) is a binding site for substrate. Mn(2+) is bound at residue Asp-17. The Proton acceptor role is filled by His-20. Ser-170 and His-199 together coordinate substrate. The Mn(2+) site is built by His-199 and His-201. A substrate-binding site is contributed by Tyr-290.

This sequence belongs to the 4-hydroxy-2-oxovalerate aldolase family.

It carries out the reaction (S)-4-hydroxy-2-oxopentanoate = acetaldehyde + pyruvate. It participates in aromatic compound metabolism; naphthalene degradation. This chain is 4-hydroxy-2-oxovalerate aldolase (nahM), found in Pseudomonas putida (Arthrobacter siderocapsulatus).